Reading from the N-terminus, the 322-residue chain is Ubiquinone biosynthesis O-methyltransferase, mitochondrial (322 aa).

The transit peptide at 1–37 (MLASVRVNQLQRLLLSARRLSSSPIIPPSRLLHQRLF) directs the protein to the mitochondrion. The disordered stretch occupies residues 46–75 (AASFSSSHPKIQTLEGKASNKSRSTSSTTS). The S-adenosyl-L-methionine site is built by Arg108, Gly139, Asp160, and Leu205. Positions 206, 209, and 210 each coordinate Mg(2+).

The protein belongs to the class I-like SAM-binding methyltransferase superfamily. UbiG/COQ3 family. Component of a multi-subunit COQ enzyme complex. Mg(2+) is required as a cofactor.

The protein resides in the mitochondrion inner membrane. It carries out the reaction a 3,4-dihydroxy-5-(all-trans-polyprenyl)benzoate + S-adenosyl-L-methionine = a 4-hydroxy-3-methoxy-5-(all-trans-polyprenyl)benzoate + S-adenosyl-L-homocysteine + H(+). The catalysed reaction is a 3-demethylubiquinone + S-adenosyl-L-methionine = a ubiquinone + S-adenosyl-L-homocysteine. It catalyses the reaction a 3-demethylubiquinol + S-adenosyl-L-methionine = a ubiquinol + S-adenosyl-L-homocysteine + H(+). Its pathway is cofactor biosynthesis; ubiquinone biosynthesis. Its function is as follows. O-methyltransferase required for two non-consecutive steps during ubiquinone biosynthesis. Catalyzes the 2 O-methylation of 3,4-dihydroxy-5-(all-trans-polyprenyl)benzoic acid into 4-hydroxy-3-methoxy-5-(all-trans-polyprenyl)benzoic acid. Also catalyzes the last step of ubiquinone biosynthesis by mediating methylation of 3-demethylubiquinone into ubiquinone. Also able to mediate the methylation of 3-demethylubiquinol into ubiquinol. The chain is Ubiquinone biosynthesis O-methyltransferase, mitochondrial from Arabidopsis thaliana (Mouse-ear cress).